The sequence spans 97 residues: Small ribosomal subunit protein bS20 (97 aa).

The protein belongs to the bacterial ribosomal protein bS20 family.

Binds directly to 16S ribosomal RNA. The sequence is that of Small ribosomal subunit protein bS20 from Gloeothece citriformis (strain PCC 7424) (Cyanothece sp. (strain PCC 7424)).